A 297-amino-acid polypeptide reads, in one-letter code: tRNA pseudouridine synthase B (297 aa).

Residue aspartate 44 is the Nucleophile of the active site.

The protein belongs to the pseudouridine synthase TruB family. Type 1 subfamily.

The enzyme catalyses uridine(55) in tRNA = pseudouridine(55) in tRNA. Responsible for synthesis of pseudouridine from uracil-55 in the psi GC loop of transfer RNAs. The chain is tRNA pseudouridine synthase B from Corynebacterium glutamicum (strain R).